Reading from the N-terminus, the 124-residue chain is uncharacterized protein (124 aa).

This sequence belongs to the asfivirus H124R family.

Its subcellular location is the virion. This is an uncharacterized protein from Ornithodoros (relapsing fever ticks).